Here is a 628-residue protein sequence, read N- to C-terminus: Hemocyanin II (628 aa).

At Thr1 the chain carries Blocked amino end (Thr); partial. Cu cation is bound by residues His173, His177, His204, His324, His328, and His364. N-linked (GlcNAc...) asparagine glycosylation is present at Asn449. Disulfide bonds link Cys534-Cys576 and Cys536-Cys583.

Belongs to the tyrosinase family. Hemocyanin subfamily. In terms of assembly, hexamer or a multiple thereof. Hemolymph.

The protein resides in the secreted. It is found in the extracellular space. Hemocyanins are copper-containing oxygen carriers occurring freely dissolved in the hemolymph of many mollusks and arthropods. The chain is Hemocyanin II from Limulus polyphemus (Atlantic horseshoe crab).